A 161-amino-acid polypeptide reads, in one-letter code: MTKKKTNTKAGSNTIALNKKARHEYFIEDEFEAGMELQGWEVKSLRQGKANIAESYVYIKDGEAFISGMTIIPLQQASTHVVANPTRIRKLLLSRRELDNLFGRINREGMTLTALSLYWSRSWVKIKIGVAKGKKLHDKREDLKEKEWQRQKDRVMKSALR.

It belongs to the SmpB family.

Its subcellular location is the cytoplasm. Functionally, required for rescue of stalled ribosomes mediated by trans-translation. Binds to transfer-messenger RNA (tmRNA), required for stable association of tmRNA with ribosomes. tmRNA and SmpB together mimic tRNA shape, replacing the anticodon stem-loop with SmpB. tmRNA is encoded by the ssrA gene; the 2 termini fold to resemble tRNA(Ala) and it encodes a 'tag peptide', a short internal open reading frame. During trans-translation Ala-aminoacylated tmRNA acts like a tRNA, entering the A-site of stalled ribosomes, displacing the stalled mRNA. The ribosome then switches to translate the ORF on the tmRNA; the nascent peptide is terminated with the 'tag peptide' encoded by the tmRNA and targeted for degradation. The ribosome is freed to recommence translation, which seems to be the essential function of trans-translation. This Vibrio cholerae serotype O1 (strain ATCC 39541 / Classical Ogawa 395 / O395) protein is SsrA-binding protein.